We begin with the raw amino-acid sequence, 802 residues long: Ribosomal protein S6 kinase alpha-5 (802 aa).

The segment covering 1–22 (MEEEGGSSGGAAGTSADGGDGG) has biased composition (gly residues). Residues 1 to 23 (MEEEGGSSGGAAGTSADGGDGGE) form a disordered region. The Protein kinase 1 domain maps to 49 to 318 (FELLKVLGTG…ADEIKEHLFF (270 aa)). ATP-binding positions include 55 to 63 (LGTGAYGKV) and K81. D177 (proton acceptor) is an active-site residue. S212 is subject to Phosphoserine; by autocatalysis. The region spanning 319-387 (QKINWDDLAA…VAPSILFKRN (69 aa)) is the AGC-kinase C-terminal domain. Phosphoserine; by MAPK1, MAPK3 and MAPK14 is present on S360. 2 positions are modified to phosphoserine; by autocatalysis: S376 and S381. The Protein kinase 2 domain maps to 426–687 (DLKDKPLGEG…MSGLRYNEWL (262 aa)). Residues 432 to 440 (LGEGSFSIC) and K455 each bind ATP. The Proton acceptor role is filled by D544. At T581 the chain carries Phosphothreonine; by MAPK1, MAPK3 and MAPK14. 4 positions are modified to phosphoserine: S647, S657, S691, and S695. Phosphothreonine; by MAPK1, MAPK3 and MAPK14 is present on T700. The interval 741–802 (AKRRKMKKTS…TLFQFSDSVA (62 aa)) is disordered. A compositionally biased stretch (low complexity) spans 749–779 (TSTSTETRSSSSESSHSSSSHSHGKTTPTKT). Phosphoserine; by autocatalysis occurs at positions 750, 752, and 758. Residues 780–802 (LQPSNPADSNNPETLFQFSDSVA) show a composition bias toward polar residues. S798 is subject to Phosphoserine.

The protein belongs to the protein kinase superfamily. AGC Ser/Thr protein kinase family. S6 kinase subfamily. Forms a complex with either MAPK1/ERK2 or MAPK3/ERK1 in quiescent cells which transiently dissociates following mitogenic stimulation. Also associates with MAPK14/p38-alpha. Activated RPS6KA5 associates with and phosphorylates the NF-kappa-B p65 subunit RELA. Interacts with CREBBP and EP300. It depends on Mg(2+) as a cofactor. Post-translationally, ser-376 and Thr-581 phosphorylation is required for kinase activity. Ser-376 and Ser-212 are autophosphorylated by the C-terminal kinase domain, and their phosphorylation is essential for the catalytic activity of the N-terminal kinase domain. Phosphorylated at Ser-360, Thr-581 and Thr-700 by MAPK1/ERK2, MAPK3/ERK1 and MAPK14/p38-alpha. Autophosphorylated at Ser-750, Ser-752 and Ser-758 by the N-terminal kinase domain. Ubiquitinated. As to expression, widely expressed with high levels in heart, brain and placenta. Less abundant in lung, kidney and liver.

Its subcellular location is the nucleus. It is found in the cytoplasm. It carries out the reaction L-seryl-[protein] + ATP = O-phospho-L-seryl-[protein] + ADP + H(+). The catalysed reaction is L-threonyl-[protein] + ATP = O-phospho-L-threonyl-[protein] + ADP + H(+). Its activity is regulated as follows. Activated by phosphorylation at Ser-360, Thr-581 and Thr-700 by MAPK1/ERK2, MAPK3/ERK1 and MAPK14/p38-alpha, and by further autophosphorylation of Ser-212, Ser-376 and Ser-381 by the activated C-terminal kinase domain. The active N-terminal kinase domain finally phosphorylates downstream substrates, as well as Ser-750, Ser-752 and Ser-758 in its own C-terminal region. Serine/threonine-protein kinase that is required for the mitogen or stress-induced phosphorylation of the transcription factors CREB1 and ATF1 and for the regulation of the transcription factors RELA, STAT3 and ETV1/ER81, and that contributes to gene activation by histone phosphorylation and functions in the regulation of inflammatory genes. Phosphorylates CREB1 and ATF1 in response to mitogenic or stress stimuli such as UV-C irradiation, epidermal growth factor (EGF) and anisomycin. Plays an essential role in the control of RELA transcriptional activity in response to TNF and upon glucocorticoid, associates in the cytoplasm with the glucocorticoid receptor NR3C1 and contributes to RELA inhibition and repression of inflammatory gene expression. In skeletal myoblasts is required for phosphorylation of RELA at 'Ser-276' during oxidative stress. In erythropoietin-stimulated cells, is necessary for the 'Ser-727' phosphorylation of STAT3 and regulation of its transcriptional potential. Phosphorylates ETV1/ER81 at 'Ser-191' and 'Ser-216', and thereby regulates its ability to stimulate transcription, which may be important during development and breast tumor formation. Directly represses transcription via phosphorylation of 'Ser-1' of histone H2A. Phosphorylates 'Ser-10' of histone H3 in response to mitogenics, stress stimuli and EGF, which results in the transcriptional activation of several immediate early genes, including proto-oncogenes c-fos/FOS and c-jun/JUN. May also phosphorylate 'Ser-28' of histone H3. Mediates the mitogen- and stress-induced phosphorylation of high mobility group protein 1 (HMGN1/HMG14). In lipopolysaccharide-stimulated primary macrophages, acts downstream of the Toll-like receptor TLR4 to limit the production of pro-inflammatory cytokines. Functions probably by inducing transcription of the MAP kinase phosphatase DUSP1 and the anti-inflammatory cytokine interleukin 10 (IL10), via CREB1 and ATF1 transcription factors. Plays a role in neuronal cell death by mediating the downstream effects of excitotoxic injury. Phosphorylates TRIM7 at 'Ser-107' in response to growth factor signaling via the MEK/ERK pathway, thereby stimulating its ubiquitin ligase activity. The chain is Ribosomal protein S6 kinase alpha-5 (RPS6KA5) from Homo sapiens (Human).